A 202-amino-acid chain; its full sequence is Peptide deformylase (202 aa).

Residues 1–24 (MAGSFAQLAKNAEKKKPSISVSKE) are disordered. Residues C121 and H163 each contribute to the Fe cation site. E164 is an active-site residue. Residue H167 participates in Fe cation binding.

Belongs to the polypeptide deformylase family. The cofactor is Fe(2+).

It carries out the reaction N-terminal N-formyl-L-methionyl-[peptide] + H2O = N-terminal L-methionyl-[peptide] + formate. Removes the formyl group from the N-terminal Met of newly synthesized proteins. Requires at least a dipeptide for an efficient rate of reaction. N-terminal L-methionine is a prerequisite for activity but the enzyme has broad specificity at other positions. The polypeptide is Peptide deformylase (Prochlorococcus marinus (strain NATL1A)).